The following is an 87-amino-acid chain: Translation initiation factor IF-1 2 (87 aa).

The S1-like domain maps to Met-1 to Lys-72.

This sequence belongs to the IF-1 family. As to quaternary structure, component of the 30S ribosomal translation pre-initiation complex which assembles on the 30S ribosome in the order IF-2 and IF-3, IF-1 and N-formylmethionyl-tRNA(fMet); mRNA recruitment can occur at any time during PIC assembly.

It is found in the cytoplasm. One of the essential components for the initiation of protein synthesis. Stabilizes the binding of IF-2 and IF-3 on the 30S subunit to which N-formylmethionyl-tRNA(fMet) subsequently binds. Helps modulate mRNA selection, yielding the 30S pre-initiation complex (PIC). Upon addition of the 50S ribosomal subunit IF-1, IF-2 and IF-3 are released leaving the mature 70S translation initiation complex. The sequence is that of Translation initiation factor IF-1 2 from Burkholderia vietnamiensis (strain G4 / LMG 22486) (Burkholderia cepacia (strain R1808)).